The primary structure comprises 455 residues: uncharacterized protein (455 aa).

The signal sequence occupies residues 1-24 (MKTTKILLHTGVLALSLLATQVMA).

This is an uncharacterized protein from Pseudomonas aeruginosa (strain ATCC 15692 / DSM 22644 / CIP 104116 / JCM 14847 / LMG 12228 / 1C / PRS 101 / PAO1).